The primary structure comprises 192 residues: Cytidylate kinase (192 aa).

7–15 (GPPGSGKST) provides a ligand contact to ATP.

Belongs to the cytidylate kinase family. Type 2 subfamily.

The protein resides in the cytoplasm. It catalyses the reaction CMP + ATP = CDP + ADP. The enzyme catalyses dCMP + ATP = dCDP + ADP. The chain is Cytidylate kinase from Halobacterium salinarum (strain ATCC 29341 / DSM 671 / R1).